The primary structure comprises 143 residues: Large-conductance mechanosensitive channel (143 aa).

2 consecutive transmembrane segments (helical) span residues 10-30 (FAVK…GAFS) and 89-109 (GSFI…FLMV).

Belongs to the MscL family. Homopentamer.

Its subcellular location is the cell inner membrane. Functionally, channel that opens in response to stretch forces in the membrane lipid bilayer. May participate in the regulation of osmotic pressure changes within the cell. This chain is Large-conductance mechanosensitive channel, found in Burkholderia multivorans (strain ATCC 17616 / 249).